We begin with the raw amino-acid sequence, 493 residues long: MVPVIALVGRPNVGKSTLFNRLTKSRDAIVAEYAGLTRDRQYGEARWQGRTYIVIDTGGISGDEEGIDAKMAEQSLQAIEEADAVLFLVDSRAGMTAADQMIAEHLRKRNKRSFLIANKVDTIDPDLARAEFSPLGLGDALPIAAAHGRGINHMLQEALGIFPKDNAEEEGEGEPASEEVAEGEEPTRIPGPSEKDGIKIAIIGRPNVGKSTLVNRMLGEERVIVYDQAGTTRDSIYIPFERNEEKYTLIDTAGVRRRGKIFEAVEKFSVVKTLQAIQDANVVIFVMDAREGVVEHDLNLLGFVLETGRALVIALNKWDGMEAAERDYVKTELERRLLFVDFADIHFISALHGTGVGHLYKSVQESFRSAVTRWPTSRLTSILEDAVQVHQPPMVNGRRIKLRYAHLGGANPPLIVIHGNQVDAVPKAYTRYLEKTYRRVLKLVGTPIRIEYKGGENPYEGKKNSLTARQVNKKRRLMSHHKKAEKKKKDKRR.

One can recognise an EngA-type G 1 domain in the interval P3 to N166. GTP-binding positions include G9–S16, D56–I60, and N118–D121. The interval N166–K195 is disordered. Acidic residues predominate over residues A167–E184. Residues I198–V371 enclose the EngA-type G 2 domain. Residues G204 to S211, D251 to V255, and N316 to D319 contribute to the GTP site. Positions T372–E456 constitute a KH-like domain. The span at G454–K463 shows a compositional bias: basic and acidic residues. The interval G454–R493 is disordered. The span at V471 to R493 shows a compositional bias: basic residues.

The protein belongs to the TRAFAC class TrmE-Era-EngA-EngB-Septin-like GTPase superfamily. EngA (Der) GTPase family. As to quaternary structure, associates with the 50S ribosomal subunit.

Functionally, GTPase that plays an essential role in the late steps of ribosome biogenesis. The sequence is that of GTPase Der from Pseudomonas aeruginosa (strain ATCC 15692 / DSM 22644 / CIP 104116 / JCM 14847 / LMG 12228 / 1C / PRS 101 / PAO1).